A 668-amino-acid chain; its full sequence is UvrABC system protein B (668 aa).

Positions 25-414 (RGLHAGARFQ…IVEQLIRPTG (390 aa)) constitute a Helicase ATP-binding domain. 38–45 (GVTGSGKT) is an ATP binding site. A Beta-hairpin motif is present at residues 91-114 (YYDYYQPESYVPARDLYIEKDASI). The Helicase C-terminal domain occupies 431–594 (DICQRVKACS…TIKKSIEDIL (164 aa)). The 36-residue stretch at 627–662 (KKMVQALRLHMKVCARELRFEEAALIRDKILQLQRQ) folds into the UVR domain.

Belongs to the UvrB family. In terms of assembly, forms a heterotetramer with UvrA during the search for lesions. Interacts with UvrC in an incision complex.

It is found in the cytoplasm. Functionally, the UvrABC repair system catalyzes the recognition and processing of DNA lesions. A damage recognition complex composed of 2 UvrA and 2 UvrB subunits scans DNA for abnormalities. Upon binding of the UvrA(2)B(2) complex to a putative damaged site, the DNA wraps around one UvrB monomer. DNA wrap is dependent on ATP binding by UvrB and probably causes local melting of the DNA helix, facilitating insertion of UvrB beta-hairpin between the DNA strands. Then UvrB probes one DNA strand for the presence of a lesion. If a lesion is found the UvrA subunits dissociate and the UvrB-DNA preincision complex is formed. This complex is subsequently bound by UvrC and the second UvrB is released. If no lesion is found, the DNA wraps around the other UvrB subunit that will check the other stand for damage. The polypeptide is UvrABC system protein B (Treponema pallidum (strain Nichols)).